Reading from the N-terminus, the 107-residue chain is Ig kappa chain V-VI region NQ2-48.2.2 (107 aa).

Residues 1–23 (QILLTQSPAIMSASPGQKVTMTC) form a framework-1 region. Cys-23 and Cys-87 are joined by a disulfide. The complementarity-determining-1 stretch occupies residues 24 to 33 (SASSSVSYMH). The segment at 34-48 (WYQQKSGTSPKRWIY) is framework-2. Residues 49–55 (DTSKLAS) are complementarity-determining-2. The interval 56–87 (GVPARFSGSGSATSYSLTITSMQAEDAATYYC) is framework-3. A complementarity-determining-3 region spans residues 88-96 (QQWSSNPLT). The tract at residues 97–106 (FGAGTKLXLK) is framework-4.

In terms of biological role, anti-2-phenyl oxazolone (PHOX) Antibody. The protein is Ig kappa chain V-VI region NQ2-48.2.2 of Mus musculus (Mouse).